A 156-amino-acid polypeptide reads, in one-letter code: uncharacterized protein (156 aa).

The protein belongs to the mimivirus L223/L227/L812 family.

This is an uncharacterized protein from Acanthamoeba polyphaga mimivirus (APMV).